Here is a 335-residue protein sequence, read N- to C-terminus: Phosphate acyltransferase (335 aa).

The protein belongs to the PlsX family. As to quaternary structure, homodimer. Probably interacts with PlsY.

It is found in the cytoplasm. The catalysed reaction is a fatty acyl-[ACP] + phosphate = an acyl phosphate + holo-[ACP]. It functions in the pathway lipid metabolism; phospholipid metabolism. Catalyzes the reversible formation of acyl-phosphate (acyl-PO(4)) from acyl-[acyl-carrier-protein] (acyl-ACP). This enzyme utilizes acyl-ACP as fatty acyl donor, but not acyl-CoA. The sequence is that of Phosphate acyltransferase from Leptospira interrogans serogroup Icterohaemorrhagiae serovar copenhageni (strain Fiocruz L1-130).